The chain runs to 613 residues: Potassium voltage-gated channel subfamily A member 5 (613 aa).

A disordered region spans residues 1–108 (MEIALVPLEN…EGDPGLGTVE (108 aa)). A tetramerization domain region spans residues 1–211 (MEIALVPLEN…FYQLGDEAME (211 aa)). The Cytoplasmic segment spans residues 1-247 (MEIALVPLEN…LIFEYPESSG (247 aa)). Residues 45–62 (GPKEPAPKGRGAQRDADS) show a composition bias toward basic and acidic residues. A run of 2 repeats spans residues 61 to 71 (DSGVRPLPPLP) and 72 to 82 (DPGVRPLPPLP). The interval 61–82 (DSGVRPLPPLPDPGVRPLPPLP) is 2 X 11 AA tandem repeat of D-[SP]-G-V-R-P-L-P-P-L-P. The segment covering 66-83 (PLPPLPDPGVRPLPPLPE) has biased composition (pro residues). Positions 84 to 93 (ELPRPRRPPP) are enriched in basic and acidic residues. K221 is covalently cross-linked (Glycyl lysine isopeptide (Lys-Gly) (interchain with G-Cter in SUMO)). The helical transmembrane segment at 248–269 (SARAIAIVSVLVILISIITFCL) threads the bilayer. At 270 to 323 (ETLPEFRDERELLRHPPAPHQPPAPAPGANGSGVMAPPSGPTVAPLLPRTLADP) the chain is on the extracellular side. Residues 282–304 (LRHPPAPHQPPAPAPGANGSGVM) are disordered. Over residues 285 to 295 (PPAPHQPPAPA) the composition is skewed to pro residues. The chain crosses the membrane as a helical span at residues 324 to 345 (FFIVETTCVIWFTFELLVRFFA). C346 is lipidated: S-palmitoyl cysteine. The Cytoplasmic segment spans residues 346–356 (CPSKAGFSRNI). Residues 357–377 (MNIIDVVAIFPYFITLGTELA) form a helical membrane-spanning segment. Residues 378 to 395 (EQQPGGGGGGQNGQQAMS) lie on the Extracellular side of the membrane. The chain crosses the membrane as a helical; Voltage-sensor span at residues 396–416 (LAILRVIRLVRVFRIFKLSRH). The Cytoplasmic portion of the chain corresponds to 417–431 (SKGLQILGKTLQASM). The S4-S5 linker stretch occupies residues 418 to 431 (KGLQILGKTLQASM). A helical membrane pass occupies residues 432-453 (RELGLLIFFLFIGVILFSSAVY). Over 454–467 (FAEADNQGTHFSSI) the chain is Extracellular. The segment at residues 468–479 (PDAFWWAVVTMT) is an intramembrane region (helical). The short motif at 480-485 (TVGYGD) is the Selectivity filter element. Residues 480-487 (TVGYGDMR) lie within the membrane without spanning it. The Extracellular portion of the chain corresponds to 488–494 (PITVGGK). A helical transmembrane segment spans residues 495–523 (IVGSLCAIAGVLTIALPVPVIVSNFNYFY). The Cytoplasmic segment spans residues 524–613 (HRETDHEEPA…CLDTSRETDL (90 aa)). The disordered stretch occupies residues 532–559 (PAVLKEEQGTQSQGPGLDRGVQRKVSGS). Residue K536 forms a Glycyl lysine isopeptide (Lys-Gly) (interchain with G-Cter in SUMO) linkage. S557 is modified (phosphoserine; by PKA). The short motif at 611 to 613 (TDL) is the PDZ-binding element.

Belongs to the potassium channel family. A (Shaker) (TC 1.A.1.2) subfamily. Kv1.5/KCNA5 sub-subfamily. Homotetramer and heterotetramer of potassium channel proteins. Interacts with DLG1, which enhances channel currents. Forms a ternary complex with DLG1 and CAV3. Interacts with KCNAB1. Interacts with UBE2I. Interacts with XIRP2; the interaction is required for normal action potential configuration in the heart. Glycosylated. In terms of processing, sumoylated on Lys-221, and Lys-536, preferentially with SUMO3. Sumoylation regulates the voltage sensitivity of the channel. In terms of tissue distribution, pancreatic islets and insulinoma.

It localises to the cell membrane. It catalyses the reaction K(+)(in) = K(+)(out). Its activity is regulated as follows. Inhibited by 4-aminopyridine, nicotine, bepridil, correolide, and endothelin-1. Voltage-gated potassium channel that mediates transmembrane potassium transport in excitable membranes. Forms tetrameric potassium-selective channels through which potassium ions pass in accordance with their electrochemical gradient. The channel alternates between opened and closed conformations in response to the voltage difference across the membrane. Can form functional homotetrameric channels and heterotetrameric channels that contain variable proportions of KCNA1, KCNA2, KCNA4, KCNA5, and possibly other family members as well; channel properties depend on the type of alpha subunits that are part of the channel. Channel properties are modulated by cytoplasmic beta subunits that regulate the subcellular location of the alpha subunits and promote rapid inactivation. Homotetrameric channels display rapid activation and slow inactivation. Required for normal electrical conduction including formation of the infranodal ventricular conduction system and normal action potential configuration, as a result of its interaction with XIRP2. May play a role in regulating the secretion of insulin in normal pancreatic islets. Its function is as follows. Exhibits a faster depolarization rate, reduced voltage-dependent recovery from inactivation and an excessive cumulative inactivation. This chain is Potassium voltage-gated channel subfamily A member 5 (KCNA5), found in Homo sapiens (Human).